A 297-amino-acid chain; its full sequence is Elongation factor Ts (297 aa).

The tract at residues 82–85 (TDFV) is involved in Mg(2+) ion dislocation from EF-Tu.

Belongs to the EF-Ts family.

Its subcellular location is the cytoplasm. Associates with the EF-Tu.GDP complex and induces the exchange of GDP to GTP. It remains bound to the aminoacyl-tRNA.EF-Tu.GTP complex up to the GTP hydrolysis stage on the ribosome. This is Elongation factor Ts from Azoarcus sp. (strain BH72).